Reading from the N-terminus, the 115-residue chain is Ribonuclease P protein component (115 aa).

Belongs to the RnpA family. In terms of assembly, consists of a catalytic RNA component (M1 or rnpB) and a protein subunit.

It catalyses the reaction Endonucleolytic cleavage of RNA, removing 5'-extranucleotides from tRNA precursor.. Functionally, RNaseP catalyzes the removal of the 5'-leader sequence from pre-tRNA to produce the mature 5'-terminus. It can also cleave other RNA substrates such as 4.5S RNA. The protein component plays an auxiliary but essential role in vivo by binding to the 5'-leader sequence and broadening the substrate specificity of the ribozyme. The chain is Ribonuclease P protein component from Staphylococcus aureus (strain Mu3 / ATCC 700698).